The primary structure comprises 307 residues: Non-homologous end joining protein Ku (307 aa).

A Ku domain is found at 11–179 (LSFGLVSIPV…EVRSMKDLNI (169 aa)). Low complexity-rich tracts occupy residues 257–267 (RGGAKAKPAAA) and 290–307 (ARAP…RARK). A disordered region spans residues 257 to 307 (RGGAKAKPAAAPRRKAPEPVAGMAEATRARKPAARAPKSPAEAPAKVRARK).

Belongs to the prokaryotic Ku family. In terms of assembly, homodimer. Interacts with LigD.

In terms of biological role, with LigD forms a non-homologous end joining (NHEJ) DNA repair enzyme, which repairs dsDNA breaks with reduced fidelity. Binds linear dsDNA with 5'- and 3'- overhangs but not closed circular dsDNA nor ssDNA. Recruits and stimulates the ligase activity of LigD. The sequence is that of Non-homologous end joining protein Ku from Paraburkholderia phymatum (strain DSM 17167 / CIP 108236 / LMG 21445 / STM815) (Burkholderia phymatum).